A 980-amino-acid chain; its full sequence is Envelope glycoprotein B (980 aa).

Over residues 1–14 the composition is skewed to polar residues; it reads MSSGCRSVGGSTWG. 2 disordered regions span residues 1–20 and 88–118; these read MSSG…RGDG and TTPS…TETP. The first 86 residues, 1–86, serve as a signal peptide directing secretion; sequence MSSGCRSVGG…LFGSCVVRAV (86 aa). Over 87–849 the chain is Virion surface; that stretch reads PTTPSPPTST…SGIASFLNNP (763 aa). Residues 96-118 show a composition bias toward low complexity; the sequence is TPTSMSTHSHGTVDPTLLPTETP. 5 disulfides stabilise this stretch: cysteine 140-cysteine 647, cysteine 157-cysteine 603, cysteine 231-cysteine 296, cysteine 389-cysteine 437, and cysteine 668-cysteine 708. The N-linked (GlcNAc...) asparagine; by host glycan is linked to asparagine 165. The segment at 197-203 is involved in fusion and/or binding to host membrane; that stretch reads VWKGYSH. The N-linked (GlcNAc...) asparagine; by host glycan is linked to asparagine 275. An involved in fusion and/or binding to host membrane region spans residues 282 to 290; that stretch reads GWMPWRHYT. 6 N-linked (GlcNAc...) asparagine; by host glycosylation sites follow: asparagine 380, asparagine 423, asparagine 497, asparagine 514, asparagine 515, and asparagine 560. Residues 505 to 516 are compositionally biased toward low complexity; the sequence is LLNPNANNNNNT. Positions 505–535 are disordered; that stretch reads LLNPNANNNNNTTRRRRSLLSVPEPQPTQDG. N-linked (GlcNAc...) asparagine; by host glycosylation is found at asparagine 727 and asparagine 749. Hydrophobic membrane proximal region stretches follow at residues 794-847 and 823-843; these read IDSV…SFLN and AVGT…SGIA. Residues 850-870 form a helical membrane-spanning segment; that stretch reads FGGLAIGLLVIAGLVAAFFAY. Residues 871-980 lie on the Intravirion side of the membrane; sequence RYVMQIRSNP…NDTMENEKMV (110 aa). Residues 925 to 928 carry the Golgi targeting motif; sequence YMSM. Residue asparagine 952 is glycosylated (N-linked (GlcNAc...) asparagine; by host). The Internalization motif signature appears at 965-968; that stretch reads YTRL. An N-linked (GlcNAc...) asparagine; by host glycan is attached at asparagine 971.

It belongs to the herpesviridae glycoprotein B family. Homotrimer; disulfide-linked. Binds to heparan sulfate proteoglycans. Interacts with gH/gL heterodimer. Post-translationally, a proteolytic cleavage by host furin generates two subunits that remain linked by disulfide bonds.

It localises to the virion membrane. The protein resides in the host cell membrane. It is found in the host endosome membrane. The protein localises to the host Golgi apparatus membrane. In terms of biological role, envelope glycoprotein that forms spikes at the surface of virion envelope. Essential for the initial attachment to heparan sulfate moieties of the host cell surface proteoglycans. Involved in fusion of viral and cellular membranes leading to virus entry into the host cell. Following initial binding to its host receptors, membrane fusion is mediated by the fusion machinery composed at least of gB and the heterodimer gH/gL. May be involved in the fusion between the virion envelope and the outer nuclear membrane during virion egress. The protein is Envelope glycoprotein B of Equine herpesvirus 1 (strain HVS25A) (EHV-1).